A 422-amino-acid chain; its full sequence is Replication factor C large subunit (422 aa).

Residue 63 to 70 (GPPGIGKT) participates in ATP binding.

This sequence belongs to the activator 1 small subunits family. RfcL subfamily. As to quaternary structure, heteromultimer composed of small subunits (RfcS) and large subunits (RfcL).

In terms of biological role, part of the RFC clamp loader complex which loads the PCNA sliding clamp onto DNA. This is Replication factor C large subunit from Pyrobaculum neutrophilum (strain DSM 2338 / JCM 9278 / NBRC 100436 / V24Sta) (Thermoproteus neutrophilus).